The primary structure comprises 30 residues: Cyclotide mela-5 (30 aa).

The cyclopeptide (Gly-Asp) cross-link spans 1–30 (GSAIACGESCFKFKCYTPGCSCSYPICKKD). Disulfide bonds link Cys-6–Cys-20, Cys-10–Cys-22, and Cys-15–Cys-27.

In terms of processing, this is a cyclic peptide. Contains 3 disulfide bonds.

Its function is as follows. Probably participates in a plant defense mechanism (Potential). Binds to and induces leakage in phospholipd membranes, particularly ones containing 1-palmitoyl-2-oleophosphatidylethanolamine (POPE). This Melicytus latifolius (Norfolk Island mahoe) protein is Cyclotide mela-5.